The following is a 477-amino-acid chain: Stromelysin-1 (477 aa).

The signal sequence occupies residues 1–17 (MKSLPILLLLCVAVCSA). A propeptide spans 18–99 (YPLDGAARGE…PRCGVPDVGH (82 aa)) (activation peptide). The Cysteine switch motif lies at 90–97 (PRCGVPDV). Residue cysteine 92 participates in Zn(2+) binding. Ca(2+) is bound by residues aspartate 124 and aspartate 158. Zn(2+) contacts are provided by histidine 168 and aspartate 170. Residues aspartate 175, glycine 176, glycine 178, and valine 180 each coordinate Ca(2+). Histidine 183 contributes to the Zn(2+) binding site. Residues glycine 190, asparagine 192, and aspartate 194 each contribute to the Ca(2+) site. Residue histidine 196 coordinates Zn(2+). Ca(2+) contacts are provided by aspartate 198, aspartate 199, and glutamate 201. Zn(2+) is bound at residue histidine 218. Glutamate 219 is an active-site residue. Zn(2+) contacts are provided by histidine 222 and histidine 228. Residues 262–287 (LYGPPPDSPETPLVPTEPVPPEPGTP) form a disordered region. Over residues 276–285 (PTEPVPPEPG) the composition is skewed to pro residues. Hemopexin repeat units follow at residues 287 to 336 (PANC…WPSL), 337 to 383 (PSGV…GFPP), 385 to 433 (VRKI…FPGI), and 434 to 477 (DSKI…WLNC). The cysteines at positions 290 and 477 are disulfide-linked. Aspartate 297 serves as a coordination point for Ca(2+). Ca(2+) contacts are provided by aspartate 389 and aspartate 438.

This sequence belongs to the peptidase M10A family. Ca(2+) serves as cofactor. The cofactor is Zn(2+). Post-translationally, directly cleaved by HTRA2 to produce active form.

It localises to the secreted. The protein resides in the extracellular space. It is found in the extracellular matrix. Its subcellular location is the nucleus. The protein localises to the cytoplasm. The catalysed reaction is Preferential cleavage where P1', P2' and P3' are hydrophobic residues.. With respect to regulation, enzymatic activity is activated by HTRA2 in dopaminergic cells upon mitochondrial stress. Its function is as follows. Metalloproteinase with a rather broad substrate specificity that can degrade fibronectin, laminin, gelatins of type I, III, IV, and V; collagens III, IV, X, and IX, and cartilage proteoglycans. Activates different molecules including growth factors, plasminogen or other matrix metalloproteinases such as MMP9. Once released into the extracellular matrix (ECM), the inactive pro-enzyme is activated by the plasmin cascade signaling pathway. Also acts intracellularly. For example, in dopaminergic neurons, gets activated by the serine protease HTRA2 upon stress and plays a pivotal role in DA neuronal degeneration by mediating microglial activation and alpha-synuclein/SNCA cleavage. In addition, plays a role in immune response and possesses antiviral activity against various viruses such as vesicular stomatitis virus, influenza A virus (H1N1) and human herpes virus 1. Mechanistically, translocates from the cytoplasm into the cell nucleus upon virus infection to influence NF-kappa-B activities. The protein is Stromelysin-1 (MMP3) of Homo sapiens (Human).